The sequence spans 195 residues: Glucagon family neuropeptides (195 aa).

The N-terminal stretch at 1–20 (MAKSSRATLALLIYGILMRY) is a signal peptide. A propeptide spanning residues 21 to 82 (SQCTPIGMGF…YYPPERRAET (62 aa)) is cleaved from the precursor. The tract at residues 113–132 (VGEEEEDEEDSEPLSKRHSD) is disordered. Residues 115–124 (EEEEDEEDSE) show a composition bias toward acidic residues. Lysine amide is present on lysine 167. Residues 171-195 (LVVPSVWTGIRDTVIITPEKRGKRY) constitute a propeptide that is removed on maturation.

The protein belongs to the glucagon family. Brain, testis, ovary and stomach. Not pancreas, pituitary, muscle and liver.

It is found in the secreted. Primary role of GHRH is to release GH from the pituitary. Its function is as follows. PACAP plays pivotal roles as a neurotransmitter and/or a neuromodulator. This chain is Glucagon family neuropeptides, found in Clarias macrocephalus (Bighead catfish).